Reading from the N-terminus, the 500-residue chain is Chromosomal replication initiator protein DnaA (500 aa).

Residues 1-37 (MSDTPFGDADHPRPAPIHPDAVLPPPMSSQSADNDPT) form a disordered region. The segment at 1–103 (MSDTPFGDAD…EELLSDHFHK (103 aa)) is domain I, interacts with DnaA modulators. The segment covering 14 to 27 (PAPIHPDAVLPPPM) has biased composition (pro residues). A domain II region spans residues 103–161 (KAIHLAITIDPDLELALGAPDHEDEEEEVPPAQFVPKVTVGVTEPSARPTTTIDDDEGN). Positions 162-378 (RLNPKYTFDS…GALIRVTAFA (217 aa)) are domain III, AAA+ region. Positions 206, 208, 209, and 210 each coordinate ATP. Residues 379–500 (SLNQQPVDIS…SEITNRIKQY (122 aa)) are domain IV, binds dsDNA.

The protein belongs to the DnaA family. Oligomerizes as a right-handed, spiral filament on DNA at oriC.

Its subcellular location is the cytoplasm. In terms of biological role, plays an essential role in the initiation and regulation of chromosomal replication. ATP-DnaA binds to the origin of replication (oriC) to initiate formation of the DNA replication initiation complex once per cell cycle. Binds the DnaA box (a 9 base pair repeat at the origin) and separates the double-stranded (ds)DNA. Forms a right-handed helical filament on oriC DNA; dsDNA binds to the exterior of the filament while single-stranded (ss)DNA is stabiized in the filament's interior. The ATP-DnaA-oriC complex binds and stabilizes one strand of the AT-rich DNA unwinding element (DUE), permitting loading of DNA polymerase. After initiation quickly degrades to an ADP-DnaA complex that is not apt for DNA replication. Binds acidic phospholipids. The sequence is that of Chromosomal replication initiator protein DnaA from Cutibacterium acnes (strain DSM 16379 / KPA171202) (Propionibacterium acnes).